We begin with the raw amino-acid sequence, 365 residues long: UPF0324 membrane protein Cj0999c (365 aa).

11 helical membrane-spanning segments follow: residues 12–34, 44–63, 83–100, 105–127, 134–153, 163–185, 197–219, 234–256, 269–288, 303–325, and 338–360; these read IVRSNFKGLLFTACIVIFAMYLS, HLAATAFAIIIGVLLSPWFF, LGIVLYGFNITLTELLSV, FLLSAIVIFFVFIIALFVGTKIF, SMLVGAGSAICGAAAVLALE, GILAVGTVVIFGLVFMFLYPIAF, AMGVFMGATLHEVANVAGAAEMA, VIIKMMRVILLVPFLLIVTYFFA, SITIPYFAFAFLGMIVLNTY, IISLGKTLCTLCIVFAMAALGLQ, and VFGLAFVLGLVLIFGGYFLTLAF.

It belongs to the UPF0324 family.

It localises to the cell membrane. The protein is UPF0324 membrane protein Cj0999c of Campylobacter jejuni subsp. jejuni serotype O:2 (strain ATCC 700819 / NCTC 11168).